A 157-amino-acid polypeptide reads, in one-letter code: Protein-export protein SecB (157 aa).

This sequence belongs to the SecB family. Homotetramer, a dimer of dimers. One homotetramer interacts with 1 SecA dimer.

The protein localises to the cytoplasm. One of the proteins required for the normal export of preproteins out of the cell cytoplasm. It is a molecular chaperone that binds to a subset of precursor proteins, maintaining them in a translocation-competent state. It also specifically binds to its receptor SecA. This Methylobacillus flagellatus (strain ATCC 51484 / DSM 6875 / VKM B-1610 / KT) protein is Protein-export protein SecB.